A 688-amino-acid polypeptide reads, in one-letter code: Polyphosphate kinase (688 aa).

ATP is bound at residue Asn-45. Mg(2+) contacts are provided by Arg-375 and Arg-405. A PLD phosphodiesterase domain is found at 430 to 464 (PGLKIHAKLFLISRKENGEVVRYAHIGTGNFNEKT). His-435 serves as the catalytic Phosphohistidine intermediate. Positions 468, 564, and 592 each coordinate ATP.

It belongs to the polyphosphate kinase 1 (PPK1) family. The cofactor is Mg(2+). Post-translationally, an intermediate of this reaction is the autophosphorylated ppk in which a phosphate is covalently linked to a histidine residue through a N-P bond.

The enzyme catalyses [phosphate](n) + ATP = [phosphate](n+1) + ADP. Functionally, catalyzes the reversible transfer of the terminal phosphate of ATP to form a long-chain polyphosphate (polyP). The polypeptide is Polyphosphate kinase (Escherichia coli O6:H1 (strain CFT073 / ATCC 700928 / UPEC)).